Consider the following 116-residue polypeptide: Cyclin-dependent protein kinase inhibitor SMR9 (116 aa).

Positions 1–22 are enriched in basic residues; that stretch reads MASKGKKPLRRTTTRRRKRSHF. The segment at 1-62 is disordered; the sequence is MASKGKKPLR…PVSAESGCCT (62 aa). Over residues 35–56 the composition is skewed to low complexity; it reads VTSTSSTSTSPTSTATPSPVSA.

Functionally, probable cyclin-dependent protein kinase (CDK) inhibitor that functions as a repressor of mitosis in the endoreduplication cell cycle. The polypeptide is Cyclin-dependent protein kinase inhibitor SMR9 (Arabidopsis thaliana (Mouse-ear cress)).